Reading from the N-terminus, the 452-residue chain is GTPase Der (452 aa).

EngA-type G domains lie at 9–170 (KIIA…PEED) and 185–362 (LQIV…KTWN). GTP is bound by residues 15–22 (GRPNVGKS), 62–66 (DTPGF), 124–127 (NKCE), 191–198 (GRPNAGKS), 238–242 (DTAGL), and 303–306 (NKWD). The KH-like domain occupies 363–448 (KKITTSKLNE…PIRFNYIKTK (86 aa)).

Belongs to the TRAFAC class TrmE-Era-EngA-EngB-Septin-like GTPase superfamily. EngA (Der) GTPase family. As to quaternary structure, associates with the 50S ribosomal subunit.

GTPase that plays an essential role in the late steps of ribosome biogenesis. The sequence is that of GTPase Der from Rickettsia bellii (strain OSU 85-389).